We begin with the raw amino-acid sequence, 307 residues long: Salivary glue protein Sgs-3 (307 aa).

The first 23 residues, 1–23 (MKLTIATALASILLIGSANVANC), serve as a signal peptide directing secretion. Positions 56–257 (APPTQQSTTQ…PTTTKPTTPK (202 aa)) are disordered.

In terms of processing, O-glycosylated by Pgnat9 in salivary glands. Specifically expressed in the salivary gland.

The protein resides in the secreted. The chain is Salivary glue protein Sgs-3 from Drosophila melanogaster (Fruit fly).